The chain runs to 138 residues: Small ribosomal subunit protein uS12m (138 aa).

Residues Met-1–Ser-29 constitute a mitochondrion transit peptide. Residues Met-36 to Pro-56 are disordered.

Belongs to the universal ribosomal protein uS12 family. Component of the mitochondrial small ribosomal subunit (mt-SSU). Mature mammalian 55S mitochondrial ribosomes consist of a small (28S) and a large (39S) subunit. The 28S small subunit contains a 12S ribosomal RNA (12S mt-rRNA) and 30 different proteins. The 39S large subunit contains a 16S rRNA (16S mt-rRNA), a copy of mitochondrial valine transfer RNA (mt-tRNA(Val)), which plays an integral structural role, and 52 different proteins.

Its subcellular location is the mitochondrion. This Homo sapiens (Human) protein is Small ribosomal subunit protein uS12m (MRPS12).